Here is a 130-residue protein sequence, read N- to C-terminus: Small ribosomal subunit protein uS9 (130 aa).

The protein belongs to the universal ribosomal protein uS9 family.

The sequence is that of Small ribosomal subunit protein uS9 from Pseudomonas fluorescens (strain Pf0-1).